The chain runs to 173 residues: Dual-action ribosomal maturation protein DarP (173 aa).

The protein belongs to the DarP family.

Its subcellular location is the cytoplasm. Its function is as follows. Member of a network of 50S ribosomal subunit biogenesis factors which assembles along the 30S-50S interface, preventing incorrect 23S rRNA structures from forming. Promotes peptidyl transferase center (PTC) maturation. The protein is Dual-action ribosomal maturation protein DarP of Pseudomonas fluorescens (strain ATCC BAA-477 / NRRL B-23932 / Pf-5).